We begin with the raw amino-acid sequence, 1044 residues long: Ribonucleoside-diphosphate reductase subunit alpha (1044 aa).

ATP-cone domains lie at 9 to 111, 118 to 217, and 235 to 325; these read YTIV…KAER, IAII…ARAR, and YVVQ…ETLG. Residues Thr-440, 455-456, Gly-484, 668-672, and 855-859 each bind substrate; these read SC, NLCTE, and PTATI. A disulfide bond links Cys-456 and Cys-685. Catalysis depends on Asn-668, which acts as the Proton acceptor. Residue Cys-670 is the Cysteine radical intermediate of the active site. Glu-672 (proton acceptor) is an active-site residue.

The protein belongs to the ribonucleoside diphosphate reductase large chain family. Tetramer of two alpha and two beta subunits.

The catalysed reaction is a 2'-deoxyribonucleoside 5'-diphosphate + [thioredoxin]-disulfide + H2O = a ribonucleoside 5'-diphosphate + [thioredoxin]-dithiol. Its activity is regulated as follows. Under complex allosteric control mediated by deoxynucleoside triphosphates and ATP binding. The type of nucleotide bound at the specificity site determines substrate preference. It seems probable that ATP makes the enzyme reduce CDP and UDP, dGTP favors ADP reduction and dTTP favors GDP reduction. Its function is as follows. Provides the precursors necessary for DNA synthesis. Catalyzes the biosynthesis of deoxyribonucleotides from the corresponding ribonucleotides. This chain is Ribonucleoside-diphosphate reductase subunit alpha (nrdA), found in Chlamydia pneumoniae (Chlamydophila pneumoniae).